Consider the following 144-residue polypeptide: Nucleoside diphosphate kinase (144 aa).

ATP is bound by residues Lys-11, Phe-59, Arg-87, Thr-93, Arg-104, and Asn-114. His-117 acts as the Pros-phosphohistidine intermediate in catalysis.

This sequence belongs to the NDK family. Homotetramer. Mg(2+) is required as a cofactor.

The protein resides in the cytoplasm. It carries out the reaction a 2'-deoxyribonucleoside 5'-diphosphate + ATP = a 2'-deoxyribonucleoside 5'-triphosphate + ADP. The enzyme catalyses a ribonucleoside 5'-diphosphate + ATP = a ribonucleoside 5'-triphosphate + ADP. In terms of biological role, major role in the synthesis of nucleoside triphosphates other than ATP. The ATP gamma phosphate is transferred to the NDP beta phosphate via a ping-pong mechanism, using a phosphorylated active-site intermediate. In Aliivibrio salmonicida (strain LFI1238) (Vibrio salmonicida (strain LFI1238)), this protein is Nucleoside diphosphate kinase.